Consider the following 493-residue polypeptide: Glutamate--tRNA ligase (493 aa).

A 'HIGH' region motif is present at residues 10–20 (PSPTGDPHVGT). The 'KMSKS' region motif lies at 251–255 (KLSKR). Lys254 contributes to the ATP binding site.

It belongs to the class-I aminoacyl-tRNA synthetase family. Glutamate--tRNA ligase type 1 subfamily. In terms of assembly, monomer.

It is found in the cytoplasm. The enzyme catalyses tRNA(Glu) + L-glutamate + ATP = L-glutamyl-tRNA(Glu) + AMP + diphosphate. Catalyzes the attachment of glutamate to tRNA(Glu) in a two-step reaction: glutamate is first activated by ATP to form Glu-AMP and then transferred to the acceptor end of tRNA(Glu). The polypeptide is Glutamate--tRNA ligase (Pseudomonas putida (strain GB-1)).